The primary structure comprises 442 residues: Tol-Pal system protein TolB (442 aa).

Positions 1–26 are cleaved as a signal peptide; the sequence is MRHRSCFSLFAGLALVFCLAVGTAAA.

It belongs to the TolB family. As to quaternary structure, the Tol-Pal system is composed of five core proteins: the inner membrane proteins TolA, TolQ and TolR, the periplasmic protein TolB and the outer membrane protein Pal. They form a network linking the inner and outer membranes and the peptidoglycan layer.

It localises to the periplasm. Part of the Tol-Pal system, which plays a role in outer membrane invagination during cell division and is important for maintaining outer membrane integrity. This Nitratidesulfovibrio vulgaris (strain ATCC 29579 / DSM 644 / CCUG 34227 / NCIMB 8303 / VKM B-1760 / Hildenborough) (Desulfovibrio vulgaris) protein is Tol-Pal system protein TolB.